The following is a 252-amino-acid chain: L-aspartate dehydrogenase (252 aa).

NAD(+) contacts are provided by Ala-119 and Asn-175. Residue His-203 is part of the active site.

The protein belongs to the L-aspartate dehydrogenase family.

It catalyses the reaction L-aspartate + NADP(+) + H2O = oxaloacetate + NH4(+) + NADPH + H(+). The catalysed reaction is L-aspartate + NAD(+) + H2O = oxaloacetate + NH4(+) + NADH + H(+). It participates in cofactor biosynthesis; NAD(+) biosynthesis; iminoaspartate from L-aspartate (dehydrogenase route): step 1/1. In terms of biological role, specifically catalyzes the NAD or NADP-dependent dehydrogenation of L-aspartate to iminoaspartate. The sequence is that of L-aspartate dehydrogenase from Methanospirillum hungatei JF-1 (strain ATCC 27890 / DSM 864 / NBRC 100397 / JF-1).